The sequence spans 138 residues: Basic phospholipase A2 BP-III (138 aa).

The N-terminal stretch at 1 to 16 (MRTLWIMAVLLVGVDG) is a signal peptide. 7 disulfide bridges follow: Cys42–Cys132, Cys44–Cys60, Cys59–Cys112, Cys65–Cys138, Cys66–Cys105, Cys73–Cys98, and Cys91–Cys103. The Ca(2+) site is built by Gly45 and Gly47. His63 is a catalytic residue. Asp106 is an active-site residue.

This sequence belongs to the phospholipase A2 family. Group II subfamily. K49 sub-subfamily. Ca(2+) serves as cofactor. In terms of tissue distribution, expressed by the venom gland.

It localises to the secreted. It carries out the reaction a 1,2-diacyl-sn-glycero-3-phosphocholine + H2O = a 1-acyl-sn-glycero-3-phosphocholine + a fatty acid + H(+). Functionally, snake venom phospholipase A2 (PLA2) that has low phospholipase A2 activity. Shows anticoagulant activities, strong myolytic activity, infiltration of polymorphonuclear cells, and edema in stromal tissues. Induces cell death of Jurkat cells in a concentration dependent manner. PLA2 catalyzes the calcium-dependent hydrolysis of the 2-acyl groups in 3-sn-phosphoglycerides. This is Basic phospholipase A2 BP-III from Protobothrops flavoviridis (Habu).